The sequence spans 198 residues: Armadillo repeat-containing protein 7 (198 aa).

ARM repeat units lie at residues glutamine 57–glycine 99 and valine 100–proline 140. Serine 169 bears the Phosphoserine mark.

Component of the minor spliceosome. Within this complex, interacts with RBM48.

Its function is as follows. As a component of the minor spliceosome, involved in the splicing of U12-type introns in pre-mRNAs. This chain is Armadillo repeat-containing protein 7 (ARMC7), found in Homo sapiens (Human).